Reading from the N-terminus, the 302-residue chain is uncharacterized protein (302 aa).

9 consecutive transmembrane segments (helical) span residues 10–30 (VLSVLVLVLLGYILKVLGVLG), 65–85 (LVLIPVICMITGTLSGTIAYL), 102–122 (VAAAMMNSGFLGYPVTAGIFG), 130–150 (IFYDTGTTLMFTSLGLLLSHI), 162–182 (AVFFPPLWAFLLGVIFNLWGL), 190–210 (ILGYLSGAAVPLIMISLGLTL), 224–244 (LVSGLRLLISPLMAAGISYVL), 251–271 (FSVTVLEASMPSAMLAAVLAI), and 282–302 (SCIFMSTILSLVSLPLWSVVL).

Belongs to the auxin efflux carrier (TC 2.A.69) family.

The protein resides in the cell membrane. This is an uncharacterized protein from Methanothermobacter thermautotrophicus (strain ATCC 29096 / DSM 1053 / JCM 10044 / NBRC 100330 / Delta H) (Methanobacterium thermoautotrophicum).